A 426-amino-acid polypeptide reads, in one-letter code: Potassium channel subfamily K member 2 (426 aa).

Residues 1–61 lie on the Cytoplasmic side of the membrane; sequence MLPSASRERP…TTINVMKWKT (61 aa). Important for GNG4 binding and L-glutamate release in astrocytes regions lie at residues 17-38 and 51-61; these read AAPDLLDPKSAAQNSKPRLSFS and DTTINVMKWKT. The helical transmembrane segment at 62 to 82 threads the bilayer; it reads VSTIFLVVVLYLIIGATVFKA. Asn110 and Asn134 each carry an N-linked (GlcNAc...) asparagine glycan. The pore-forming intramembrane region spans 144–170; it reads LGSSFFFAGTVITTIGFGNISPRTEGG. Residues Thr157, Ile158, Gly159, and Phe160 each contribute to the K(+) site. The segment at 157-162 is selectivity filter 1; sequence TIGFGN. A helical membrane pass occupies residues 172–192; that stretch reads IFCIIYALLGIPLFGFLLAGV. Topologically, residues 193–223 are cytoplasmic; that stretch reads GDQLGTIFGKGIAKVEDTFIKWNVSQTKIRI. Residues 224–244 form a helical membrane-spanning segment; that stretch reads ISTIIFILFGCVLFVALPAII. Positions 253–283 form an intramembrane region, pore-forming; the sequence is ALDAIYFVVITLTTIGFGDYVAGGSDIEYLD. The K(+) site is built by Thr266, Ile267, Gly268, and Phe269. Residues 266–271 form a selectivity filter 2 region; it reads TIGFGD. Residues 288 to 308 form a helical membrane-spanning segment; sequence VVWFWILVGLAYFAAVLSMIG. Residues 309–426 are Cytoplasmic-facing; sequence DWLRVISKKT…EEIAVIENIK (118 aa). Residues 313 to 326 form an interaction with AKAP5 region; the sequence is VISKKTKEEVGEFR. Residues 337 to 385 form an essential for chloroform and halothane sensitivity region; that stretch reads TAEFKETRRRLSVEIYDKFQRATSIKRKLSAELAGNHNQELTPCRRTLS. Ser348 is subject to Phosphoserine; by PKA.

The protein belongs to the two pore domain potassium channel (TC 1.A.1.8) family. In terms of assembly, homodimer; disulfide-linked. Forms heterodimers with other 2-pore domain K(+) channel subunits, such as KCNK1, KCNK4, KCNK10 and KCNK18. Interacts with AKAP5; the channel is recruited to postsynaptic microdomains by AKAP5 where it can integrate neurotransmitter receptor signals. Part of a complex composed of AKAP5 and ADRB2. Upon AKAP5 binding, the channel is no longer sensitive to intracellular acidification, membrane stretch or arachidonic acid stimuli. Interacts with POPDC1; the interaction enhances KCNK2 surface expression and is inhibited by cAMP. Interacts (via N-terminus) with G-protein subunit GNG4 (via C-terminus); this interaction confers ion selectivity to L-glutamate and Cl(-) anions. In terms of processing, phosphorylation at Ser-348 controls the reversible conversion from a leak channel to a voltage-dependent channel. Detected in kidney, adrenal gland and brain where it is preferentially expressed in the amygdala but not found in thalamus, hypothalamus, hippocampus or substantia nigra.

The protein resides in the cell membrane. Its subcellular location is the endoplasmic reticulum membrane. It is found in the cell projection. It localises to the axon. The protein localises to the dendrite. The protein resides in the postsynaptic density membrane. Its subcellular location is the sarcolemma. It catalyses the reaction K(+)(in) = K(+)(out). The catalysed reaction is L-glutamate(out) = L-glutamate(in). The enzyme catalyses chloride(in) = chloride(out). It carries out the reaction Rb(+)(in) = Rb(+)(out). It catalyses the reaction Cs(+)(in) = Cs(+)(out). Activated by various stimuli including intracellular acidic pH, mechanical stretch and polyunsaturated fatty acids such as arachidonic acid. Activated by volatile anesthetics such as chloroform, halothane, and isoflurane. Functionally, k(+) channel that conducts voltage-dependent outward rectifying currents upon membrane depolarization. Voltage sensing is coupled to K(+) electrochemical gradient in an 'ion flux gating' mode where outward but not inward ion flow opens the gate. Converts to voltage-independent 'leak' conductance mode upon stimulation by various stimuli including mechanical membrane stretch, acidic pH, heat and lipids. Reversibly converts between a voltage-insensitive K(+) 'leak' channel and a voltage-dependent outward rectifying K(+) channel in a phosphorylation-dependent manner. Homo- and heterodimerizes to form functional channels with distinct regulatory and gating properties. In trigeminal ganglia sensory neurons, the heterodimer of KCNK2/TREK-1 and KCNK18/TRESK inhibits neuronal firing and neurogenic inflammation by stabilizing the resting membrane potential at K(+) equilibrium potential as well as by regulating the threshold of action potentials and the spike frequency. At trigeminal A-beta afferent nerves, the heterodimer of KCNK2/TREK-1 and KCNK4/TRAAK is mostly coexpressed at nodes of Ranvier where it conducts voltage-independent mechanosensitive and thermosensitive currents, allowing rapid action potential repolarization, high speed and high frequence saltatory conduction on myelinated nerves to ensure prompt sensory responses. In hippocampal astrocytes, the heterodimer of KCNK2/TREK-1 and KCNK1/TWIK-1 allows passive K(+) conductance under basal conditions, but changes ion selectivity and becomes permeable to L-glutamate and Cl(-) ions upon binding to G-protein subunit GNG4 in stimulated astrocytes. Mediates rapid L-glutamate release in response to activation of G-protein-coupled receptors, such as F2R and CNR1. In hippocampal pyramidal neurons, the homodimer of KCNK2/TREK-1 contributes to gamma-aminobutyric acid (GABA) B-induced slow inhibitory postsynaptic potential. Associates with AKAP5 and Gs-protein-coupled receptor B2AR at postsynaptic dense bodies and converts to a leak channel no longer sensitive to stimulation by arachidonic acid, acidic pH or mechanical stress, nor inhibited by Gq-coupled receptors but still under the negative control of Gs-coupled receptors. Permeable to other monovalent cations such as Rb(+) and Cs(+). Does not display channel activity but reduces the channel activity of isoform 1 and isoform 2 and reduces cell surface expression of isoform 2. This chain is Potassium channel subfamily K member 2, found in Homo sapiens (Human).